The sequence spans 379 residues: D-threonine aldolase (379 aa).

Lys59 is modified (N6-(pyridoxal phosphate)lysine).

Belongs to the DSD1 family. Pyridoxal 5'-phosphate serves as cofactor. Requires Mn(2+) as cofactor. Co(2+) is required as a cofactor. It depends on Ni(2+) as a cofactor. The cofactor is Mg(2+).

It catalyses the reaction D-threonine = acetaldehyde + glycine. The enzyme catalyses D-allo-threonine = acetaldehyde + glycine. Its activity is regulated as follows. Inhibited by the carbonyl reagents hydroxylamine, phenylhydrazine and semicarbazide. Inhibited by the chelating agent EDTA. Inhibited by the sulfhydryl reagent p-chloromercuribenzoic acid, and by sodium cyanide. Inhibited by iodoacetate, Ag(2)SO(4), HgCl(2) and CdCl(2). Competitively inhibited by beta-hydroxyaspartate and O-phospho-DL-threonine. Catalyzes the reversible cleavage of D-threonine or D-allothreonine into glycine and acetaldehyde. Can also cleave D-beta-phenylserine, D-beta-hydroxy-alpha-aminovaleric acid, D-beta-3,4-dihydroxyphenylserine and D-beta-3,4-methylenedioxyphenylserine into glycine and the corresponding aldehyde compounds. Inactive towards D-serine, beta-hydroxyaspartate and O-phospho-DL-threonine. This Arthrobacter sp protein is D-threonine aldolase.